A 164-amino-acid chain; its full sequence is Large ribosomal subunit protein uL11 (164 aa).

The protein belongs to the universal ribosomal protein uL11 family. In terms of assembly, part of the ribosomal stalk of the 50S ribosomal subunit. Interacts with L10 and the large rRNA to form the base of the stalk. L10 forms an elongated spine to which L12 dimers bind in a sequential fashion forming a multimeric L10(L12)X complex.

Functionally, forms part of the ribosomal stalk which helps the ribosome interact with GTP-bound translation factors. The polypeptide is Large ribosomal subunit protein uL11 (Pyrococcus abyssi (strain GE5 / Orsay)).